A 102-amino-acid chain; its full sequence is N(4)-acetylcytidine amidohydrolase (102 aa).

The 88-residue stretch at 6 to 93 folds into the ASCH domain; sequence TFFSRFEQDI…IKEIYPGLDE (88 aa). Residue lysine 20 is the Proton acceptor of the active site. Threonine 23 functions as the Nucleophile in the catalytic mechanism. The active-site Proton donor is glutamate 73.

Belongs to the N(4)-acetylcytidine amidohydrolase family.

The enzyme catalyses N(4)-acetylcytidine + H2O = cytidine + acetate + H(+). It carries out the reaction N(4)-acetyl-2'-deoxycytidine + H2O = 2'-deoxycytidine + acetate + H(+). It catalyses the reaction N(4)-acetylcytosine + H2O = cytosine + acetate + H(+). Catalyzes the hydrolysis of N(4)-acetylcytidine (ac4C). The protein is N(4)-acetylcytidine amidohydrolase of Serratia proteamaculans (strain 568).